Reading from the N-terminus, the 121-residue chain is Ribosome-binding factor A (121 aa).

This sequence belongs to the RbfA family. Monomer. Binds 30S ribosomal subunits, but not 50S ribosomal subunits or 70S ribosomes.

It is found in the cytoplasm. Its function is as follows. One of several proteins that assist in the late maturation steps of the functional core of the 30S ribosomal subunit. Associates with free 30S ribosomal subunits (but not with 30S subunits that are part of 70S ribosomes or polysomes). Required for efficient processing of 16S rRNA. May interact with the 5'-terminal helix region of 16S rRNA. In Clostridium novyi (strain NT), this protein is Ribosome-binding factor A.